We begin with the raw amino-acid sequence, 374 residues long: Copper-containing nitrite reductase (374 aa).

The segment at residues 1–31 (MFTRRAALVGAAALASAPLVIRTAGAEEAPA) is a signal peptide (tat-type signal). Plastocyanin-like domains follow at residues 93-189 (MTFD…IMVL) and 254-355 (GAVG…VLVE). The Cu cation site is built by histidine 126, histidine 131, histidine 166, cysteine 167, histidine 177, methionine 182, and histidine 338.

This sequence belongs to the multicopper oxidase family. As to quaternary structure, homotrimer. Cu(2+) serves as cofactor. It depends on Cu(+) as a cofactor. The cofactor is FAD. In terms of processing, predicted to be exported by the Tat system. The position of the signal peptide cleavage has not been experimentally proven.

The protein resides in the periplasm. It carries out the reaction nitric oxide + Fe(III)-[cytochrome c] + H2O = Fe(II)-[cytochrome c] + nitrite + 2 H(+). It functions in the pathway nitrogen metabolism; nitrate reduction (denitrification); dinitrogen from nitrate: step 2/4. The sequence is that of Copper-containing nitrite reductase (nirK) from Cereibacter sphaeroides (strain ATCC 17025 / ATH 2.4.3) (Rhodobacter sphaeroides).